The following is a 168-amino-acid chain: G/U mismatch-specific DNA glycosylase (168 aa).

This sequence belongs to the uracil-DNA glycosylase (UDG) superfamily. TDG/mug family. As to quaternary structure, binds DNA as a monomer.

It is found in the cytoplasm. It catalyses the reaction Specifically hydrolyzes mismatched double-stranded DNA and polynucleotides, releasing free uracil.. In terms of biological role, excises ethenocytosine and uracil, which can arise by alkylation or deamination of cytosine, respectively, from the corresponding mispairs with guanine in ds-DNA. It is capable of hydrolyzing the carbon-nitrogen bond between the sugar-phosphate backbone of the DNA and the mispaired base. The complementary strand guanine functions in substrate recognition. Required for DNA damage lesion repair in stationary-phase cells. In Citrobacter koseri (strain ATCC BAA-895 / CDC 4225-83 / SGSC4696), this protein is G/U mismatch-specific DNA glycosylase.